Reading from the N-terminus, the 487-residue chain is Homoserine O-acetyltransferase (487 aa).

Positions 45-352 (NVILVCHPLT…PHGHDGFLLE (308 aa)) constitute an AB hydrolase-1 domain. Ser150 serves as the catalytic Nucleophile. A substrate-binding site is contributed by Arg219. Residues Asp313 and His346 contribute to the active site. Asp347 contributes to the substrate binding site. CBS domains lie at 373–430 (MTNN…FQDL) and 434–487 (MTKD…EVLQ).

The protein belongs to the AB hydrolase superfamily. MetX family. As to quaternary structure, homodimer.

The protein resides in the cytoplasm. It carries out the reaction L-homoserine + acetyl-CoA = O-acetyl-L-homoserine + CoA. It participates in amino-acid biosynthesis; L-methionine biosynthesis via de novo pathway; O-acetyl-L-homoserine from L-homoserine: step 1/1. Transfers an acetyl group from acetyl-CoA to L-homoserine, forming acetyl-L-homoserine. This chain is Homoserine O-acetyltransferase, found in Methanocorpusculum labreanum (strain ATCC 43576 / DSM 4855 / Z).